We begin with the raw amino-acid sequence, 321 residues long: Lipoyl synthase (321 aa).

Cys-68, Cys-73, Cys-79, Cys-94, Cys-98, Cys-101, and Ser-308 together coordinate [4Fe-4S] cluster. One can recognise a Radical SAM core domain in the interval 80–297; that stretch reads FNHGTATFMI…KDVAMGLGFS (218 aa).

Belongs to the radical SAM superfamily. Lipoyl synthase family. It depends on [4Fe-4S] cluster as a cofactor.

The protein resides in the cytoplasm. The enzyme catalyses [[Fe-S] cluster scaffold protein carrying a second [4Fe-4S](2+) cluster] + N(6)-octanoyl-L-lysyl-[protein] + 2 oxidized [2Fe-2S]-[ferredoxin] + 2 S-adenosyl-L-methionine + 4 H(+) = [[Fe-S] cluster scaffold protein] + N(6)-[(R)-dihydrolipoyl]-L-lysyl-[protein] + 4 Fe(3+) + 2 hydrogen sulfide + 2 5'-deoxyadenosine + 2 L-methionine + 2 reduced [2Fe-2S]-[ferredoxin]. Its pathway is protein modification; protein lipoylation via endogenous pathway; protein N(6)-(lipoyl)lysine from octanoyl-[acyl-carrier-protein]: step 2/2. Functionally, catalyzes the radical-mediated insertion of two sulfur atoms into the C-6 and C-8 positions of the octanoyl moiety bound to the lipoyl domains of lipoate-dependent enzymes, thereby converting the octanoylated domains into lipoylated derivatives. This is Lipoyl synthase from Aeromonas hydrophila subsp. hydrophila (strain ATCC 7966 / DSM 30187 / BCRC 13018 / CCUG 14551 / JCM 1027 / KCTC 2358 / NCIMB 9240 / NCTC 8049).